Reading from the N-terminus, the 1058-residue chain is MSSSPLSKKRRVSGPDPKPGSNCSPAQSVLSEVPSVPTNGMAKNGSEADIDEGLYSRQLYVLGHEAMKRLQTSSVLVSGLRGLGVEIAKNIILGGVKAVTLHDQGTAQWADLSSQFYLREEDIGKNRAEVSQPRLAELNSYVPVTAYTGPLVEDFLSGFQVVVLTNTPLEDQLRVGEFCHNRGIKLVVADTRGLFGQLFCDFGEEMILTDSNGEQPLSAMVSMVTKDNPGVVTCLDEARHGFESGDFVSFSEVQGMVELNGNQPMEIKVLGPYTFSICDTSNFSDYIRGGIVSQVKVPKKISFKSLVASLAEPDFVVTDFAKFSRPAQLHIGFQALHQFCAQHGRPPRPRNEEDAAELVALAQAVNARALPAVQQNNLDEDLIRKLAYVAAGDLAPINAFIGGLAAQEVMKACSGKFMPIMQWLYFDALECLPEDKEVLTEDKCLQRQNRYDGQVAVFGSDLQEKLGKQKYFLVGAGAIGCELLKNFAMIGLGCGEGGEIIVTDMDTIEKSNLNRQFLFRPWDVTKLKSDTAAAAVRQMNPHIRVTSHQNRVGPDTERIYDDDFFQNLDGVANALDNVDARMYMDRRCVYYRKPLLESGTLGTKGNVQVVIPFLTESYSSSQDPPEKSIPICTLKNFPNAIEHTLQWARDEFEGLFKQPAENVNQYLTDPKFVERTLRLAGTQPLEVLEAVQRSLVLQRPQTWADCVTWACHHWHTQYSNNIRQLLHNFPPDQLTSSGAPFWSGPKRCPHPLTFDVNNPLHLDYVMAAANLFAQTYGLTGSQDRAAVATFLQSVQVPEFTPKSGVKIHVSDQELQSANASVDDSRLEELKATLPSPDKLPGFKMYPIDFEKDDDSNFHMDFIVAASNLRAENYDIPSADRHKSKLIAGKIIPAIATTTAAVVGLVCLELYKVVQGHRQLDSYKNGFLNLALPFFGFSEPLAAPRHQYYNQEWTLWDRFEVQGLQPNGEEMTLKQFLDYFKTEHKLEITMLSQGVSMLYSFFMPAAKLKERLDQPMTEIVSRVSKRKLGRHVRALVLELCCNDESGEDVEVPYVRYTIR.

The interval 1 to 47 (MSSSPLSKKRRVSGPDPKPGSNCSPAQSVLSEVPSVPTNGMAKNGSE) is disordered. At Ser-2 the chain carries N-acetylserine. Residue Ser-2 is modified to N-acetylalanine. At Ser-4 the chain carries Phosphoserine. The short motif at 5-11 (PLSKKRR) is the Nuclear localization signal element. Residues Ser-13, Ser-21, Ser-24, and Ser-46 each carry the phosphoserine modification. Residues 21 to 30 (SNCSPAQSVL) are compositionally biased toward polar residues. At Tyr-55 the chain carries Phosphotyrosine. 2 consecutive repeat copies span residues 63 to 199 (GHEA…GQLF) and 459 to 611 (GSDL…QVVI). Positions 63-611 (GHEAMKRLQT…GTKGNVQVVI (549 aa)) are 2 approximate repeats. ATP contacts are provided by residues Ala-478, Asp-504, Arg-515, Lys-528, and 576–577 (DN). The residue at position 528 (Lys-528) is an N6-succinyllysine. Cys-632 serves as the catalytic Glycyl thioester intermediate. At Lys-671 the chain carries N6-acetyllysine. The residue at position 800 (Thr-800) is a Phosphothreonine. Ser-810, Ser-816, Ser-820, and Ser-835 each carry phosphoserine. Lys-980 is modified (N6-acetyllysine).

The protein belongs to the ubiquitin-activating E1 family. Monomer. Interacts with GAN (via BTB domain). ISGylated. Detected in erythrocytes (at protein level). Ubiquitous.

Its subcellular location is the cytoplasm. The protein resides in the mitochondrion. The protein localises to the nucleus. It catalyses the reaction ATP + ubiquitin + [E1 ubiquitin-activating enzyme]-L-cysteine = AMP + diphosphate + S-ubiquitinyl-[E1 ubiquitin-activating enzyme]-L-cysteine.. It functions in the pathway protein modification; protein ubiquitination. Functionally, catalyzes the first step in ubiquitin conjugation to mark cellular proteins for degradation through the ubiquitin-proteasome system. Activates ubiquitin by first adenylating its C-terminal glycine residue with ATP, and thereafter linking this residue to the side chain of a cysteine residue in E1, yielding a ubiquitin-E1 thioester and free AMP. Essential for the formation of radiation-induced foci, timely DNA repair and for response to replication stress. Promotes the recruitment of TP53BP1 and BRCA1 at DNA damage sites. In Homo sapiens (Human), this protein is Ubiquitin-like modifier-activating enzyme 1 (UBA1).